Here is a 322-residue protein sequence, read N- to C-terminus: Crystallin J1B (322 aa).

Belongs to the ADP-ribosylglycohydrolase family. J1 crystallin subfamily. Expressed in the rhopalia. Present in both the large and small eyes.

The sequence is that of Crystallin J1B from Tripedalia cystophora (Jellyfish).